Here is a 286-residue protein sequence, read N- to C-terminus: Bifunctional protein FolD (286 aa).

Residues 165–167 (GRS) and serine 190 each bind NADP(+).

This sequence belongs to the tetrahydrofolate dehydrogenase/cyclohydrolase family. As to quaternary structure, homodimer.

It carries out the reaction (6R)-5,10-methylene-5,6,7,8-tetrahydrofolate + NADP(+) = (6R)-5,10-methenyltetrahydrofolate + NADPH. The catalysed reaction is (6R)-5,10-methenyltetrahydrofolate + H2O = (6R)-10-formyltetrahydrofolate + H(+). It functions in the pathway one-carbon metabolism; tetrahydrofolate interconversion. Its function is as follows. Catalyzes the oxidation of 5,10-methylenetetrahydrofolate to 5,10-methenyltetrahydrofolate and then the hydrolysis of 5,10-methenyltetrahydrofolate to 10-formyltetrahydrofolate. In Staphylococcus aureus (strain JH9), this protein is Bifunctional protein FolD.